The sequence spans 56 residues: Small ribosomal subunit protein uS14z/uS14y/uS14x (56 aa).

4 residues coordinate Zn(2+): Cys21, Cys24, Cys39, and Cys42.

It belongs to the universal ribosomal protein uS14 family. Zn(2+) is required as a cofactor.

The polypeptide is Small ribosomal subunit protein uS14z/uS14y/uS14x (RPS29A) (Arabidopsis thaliana (Mouse-ear cress)).